The sequence spans 346 residues: MTQHRPPLEIRLCGPRGFCAGVDRAIQIVVLALKKYGAPVYVRHEIVHNRYVVEGLQARGAIFVEELDEIPAAHRNQPVVFSAHGVPKSVPADAEAKNLFYLDATCPLVSKVHKQAMRHQRLGRHVILIGHSGHPEVIGTMGQLPDGAVTLIETVEDAHTCHFDDEDNLGFVTQTTLSVDDTAGIIKELQARFPNLAAPAAESICYATTNRQDAVRAAAPGCDLFLIVGAPNSSNSKRLVEVAEKAGARMSMLVQRAEDIEWEQIGDISVVGLSAGASAPEIIVDEIIDAFKARFDVKIELAETTVETENFLVNREIRDVELTVKDMAFVNGEHRVVGISKLMQGK.

Cys-19 contributes to the [4Fe-4S] cluster binding site. 2 residues coordinate (2E)-4-hydroxy-3-methylbut-2-enyl diphosphate: His-48 and His-84. His-48 and His-84 together coordinate dimethylallyl diphosphate. 2 residues coordinate isopentenyl diphosphate: His-48 and His-84. Position 106 (Cys-106) interacts with [4Fe-4S] cluster. His-134 serves as a coordination point for (2E)-4-hydroxy-3-methylbut-2-enyl diphosphate. His-134 contributes to the dimethylallyl diphosphate binding site. His-134 provides a ligand contact to isopentenyl diphosphate. Catalysis depends on Glu-136, which acts as the Proton donor. Thr-175 is a binding site for (2E)-4-hydroxy-3-methylbut-2-enyl diphosphate. Cys-205 provides a ligand contact to [4Fe-4S] cluster. Positions 233, 234, 235, and 278 each coordinate (2E)-4-hydroxy-3-methylbut-2-enyl diphosphate. Residues Ser-233, Ser-234, Asn-235, and Ser-278 each coordinate dimethylallyl diphosphate. Isopentenyl diphosphate is bound by residues Ser-233, Ser-234, Asn-235, and Ser-278.

It belongs to the IspH family. The cofactor is [4Fe-4S] cluster.

It carries out the reaction isopentenyl diphosphate + 2 oxidized [2Fe-2S]-[ferredoxin] + H2O = (2E)-4-hydroxy-3-methylbut-2-enyl diphosphate + 2 reduced [2Fe-2S]-[ferredoxin] + 2 H(+). The enzyme catalyses dimethylallyl diphosphate + 2 oxidized [2Fe-2S]-[ferredoxin] + H2O = (2E)-4-hydroxy-3-methylbut-2-enyl diphosphate + 2 reduced [2Fe-2S]-[ferredoxin] + 2 H(+). It participates in isoprenoid biosynthesis; dimethylallyl diphosphate biosynthesis; dimethylallyl diphosphate from (2E)-4-hydroxy-3-methylbutenyl diphosphate: step 1/1. Its pathway is isoprenoid biosynthesis; isopentenyl diphosphate biosynthesis via DXP pathway; isopentenyl diphosphate from 1-deoxy-D-xylulose 5-phosphate: step 6/6. Its function is as follows. Catalyzes the conversion of 1-hydroxy-2-methyl-2-(E)-butenyl 4-diphosphate (HMBPP) into a mixture of isopentenyl diphosphate (IPP) and dimethylallyl diphosphate (DMAPP). Acts in the terminal step of the DOXP/MEP pathway for isoprenoid precursor biosynthesis. The chain is 4-hydroxy-3-methylbut-2-enyl diphosphate reductase from Brucella melitensis biotype 1 (strain ATCC 23456 / CCUG 17765 / NCTC 10094 / 16M).